We begin with the raw amino-acid sequence, 148 residues long: MFDITLLILLALAGLGFVSHNMAVTVSVLVLIVIRMTPLSAWFPWVEKQGVTVGIIILTISVMAPIASGTLPTSTLFHAFLNWKSLVAIAVGVFVSWLGGKGVALMGSQPSIVAGLLVGTVLGVALFRGVPVGPLIAAGLVSLLIGRQ.

A run of 4 helical transmembrane segments spans residues 4–24 (ITLL…NMAV), 51–71 (VTVG…SGTL), 86–106 (LVAI…VALM), and 112–132 (IVAG…GVPV).

Belongs to the UPF0756 family.

Its subcellular location is the cell membrane. The chain is UPF0756 membrane protein ESA_02180 from Cronobacter sakazakii (strain ATCC BAA-894) (Enterobacter sakazakii).